We begin with the raw amino-acid sequence, 181 residues long: Large ribosomal subunit protein uL6 (181 aa).

This sequence belongs to the universal ribosomal protein uL6 family. In terms of assembly, part of the 50S ribosomal subunit.

Functionally, this protein binds to the 23S rRNA, and is important in its secondary structure. It is located near the subunit interface in the base of the L7/L12 stalk, and near the tRNA binding site of the peptidyltransferase center. The polypeptide is Large ribosomal subunit protein uL6 (Saccharolobus solfataricus (strain ATCC 35092 / DSM 1617 / JCM 11322 / P2) (Sulfolobus solfataricus)).